We begin with the raw amino-acid sequence, 342 residues long: A-type ATP synthase subunit C (342 aa).

Belongs to the V-ATPase V0D/AC39 subunit family. Has multiple subunits with at least A(3), B(3), C, D, E, F, H, I and proteolipid K(x).

The protein resides in the cell membrane. Component of the A-type ATP synthase that produces ATP from ADP in the presence of a proton gradient across the membrane. In Archaeoglobus fulgidus (strain ATCC 49558 / DSM 4304 / JCM 9628 / NBRC 100126 / VC-16), this protein is A-type ATP synthase subunit C.